The following is a 530-amino-acid chain: Potassium voltage-gated channel subfamily A member 6 (530 aa).

The interval 1-35 (MRSEKSLTLAAPGEVRGPEGEQQDAGEFQEAEGGG) is disordered. The residue at position 3 (S3) is a Phosphoserine. Acidic residues predominate over residues 21–30 (EQQDAGEFQE). Residues 172 to 193 (PARGIAIVSVLVILISIVIFCL) form a helical membrane-spanning segment. The interval 203 to 239 (GRGGSNEGSGTRMSPASRGSHEEEDEDEDSYAFPGSI) is disordered. S222 is modified (phosphoserine; by CK2). A helical membrane pass occupies residues 264–285 (FFLVETLCIVWFTFELLVRFSA). C286 carries the S-palmitoyl cysteine lipid modification. The chain crosses the membrane as a helical span at residues 297–317 (MNIIDLVAIFPYFITLGTELV). The chain crosses the membrane as a helical; Voltage-sensor span at residues 339–359 (LAILRVIRLVRVFRIFKLSRH). The tract at residues 361-374 (KGLQILGKTLQASM) is S4-S5 linker. The chain crosses the membrane as a helical span at residues 375 to 396 (RELGLLIFFLFIGVILFSSAVY). Positions 411 to 422 (PDAFWWAVVTMT) form an intramembrane region, helical. The Selectivity filter signature appears at 423–428 (TVGYGD). The stretch at 423–430 (TVGYGDMY) is an intramembrane region. The helical transmembrane segment at 438 to 466 (IVGSLCAIAGVLTIALPVPVIVSNFNYFY) threads the bilayer. At S512 the chain carries Phosphoserine; by PKA. The short motif at 527–529 (LTE) is the PDZ-binding element. Phosphothreonine; by PKA is present on T528.

The protein belongs to the potassium channel family. A (Shaker) (TC 1.A.1.2) subfamily. Kv1.6/KCNA6 sub-subfamily. In terms of assembly, homotetramer and heterotetramer of potassium channel proteins. Interacts with KCNAB1 and KCNAB2.

It localises to the cell membrane. It carries out the reaction K(+)(in) = K(+)(out). Its function is as follows. Voltage-gated potassium channel that mediates transmembrane potassium transport in excitable membranes. Forms tetrameric potassium-selective channels through which potassium ions pass in accordance with their electrochemical gradient. The channel alternates between opened and closed conformations in response to the voltage difference across the membrane. Can form functional homotetrameric channels and heterotetrameric channels that contain variable proportions of KCNA1, KCNA2, KCNA4, KNCA5, KCNA6, and possibly other family members as well; channel properties depend on the type of alpha subunits that are part of the channel. Channel properties are modulated by cytoplasmic beta subunits that regulate the subcellular location of the alpha subunits and promote rapid inactivation. Homotetrameric channels display rapid activation and slow inactivation. In Rattus norvegicus (Rat), this protein is Potassium voltage-gated channel subfamily A member 6 (Kcna6).